The following is a 187-amino-acid chain: UPF0301 protein YqgE (187 aa).

It belongs to the UPF0301 (AlgH) family.

The sequence is that of UPF0301 protein YqgE from Escherichia fergusonii (strain ATCC 35469 / DSM 13698 / CCUG 18766 / IAM 14443 / JCM 21226 / LMG 7866 / NBRC 102419 / NCTC 12128 / CDC 0568-73).